A 543-amino-acid polypeptide reads, in one-letter code: Germacrene A synthase (543 aa).

Residues D296, D300, D439, and E447 each coordinate Mg(2+). The DDXXD motif motif lies at 296–300; sequence DDTYD.

It belongs to the terpene synthase family. Tpsa subfamily. Mg(2+) serves as cofactor. Requires Mn(2+) as cofactor. As to expression, barely detectable in leaves.

Its subcellular location is the plastid. It is found in the chloroplast. It catalyses the reaction (2E,6E)-farnesyl diphosphate = germacrene A + diphosphate. The enzyme catalyses (2E,6E)-farnesyl diphosphate = (1S,2S,4R)-beta-elemene + diphosphate. It participates in secondary metabolite biosynthesis; terpenoid biosynthesis. Its function is as follows. Sesquiterpene synthase involved in the biosynthesis of volatile compounds widely used in aromatherapy and folk medicine, and present in culinary herbs. Mediates the conversion of (2E,6E)-farnesyl diphosphate (FPP) into germacrene A and beta-elemene. Not able to use (2E)-geranyl diphosphate (GPP) as substrate. The chain is Germacrene A synthase from Lavandula viridis (Green lavender).